Here is a 323-residue protein sequence, read N- to C-terminus: V-type ATP synthase subunit C (323 aa).

The protein belongs to the V-ATPase V0D/AC39 subunit family.

Produces ATP from ADP in the presence of a proton gradient across the membrane. This is V-type ATP synthase subunit C from Thermus thermophilus (strain ATCC BAA-163 / DSM 7039 / HB27).